The following is a 1314-amino-acid chain: E3 ubiquitin-protein ligase RNF123 (1314 aa).

The residue at position 2 (Ala-2) is an N-acetylalanine. In terms of domain architecture, B30.2/SPRY spans 74–254 (VDSEDEESQG…VAFNFGSRPL (181 aa)). The segment at 460–481 (HRSSREGKDSAEDRAEAAEERP) is disordered. Residues 462 to 481 (SSREGKDSAEDRAEAAEERP) are compositionally biased toward basic and acidic residues. Ser-675 bears the Phosphoserine mark. Position 683 is an asymmetric dimethylarginine (Arg-683). Residues 968–974 (WILVRLW) are interaction with NFKB1. Residues Cys-1254, Cys-1257, Cys-1269, His-1271, Cys-1274, Cys-1277, Cys-1288, and Cys-1291 each coordinate Zn(2+). The segment at 1254–1292 (CPICYAHPISAVFQPCGHKSCKACIDQHLMNNKDCFFCK) adopts an RING-type zinc-finger fold.

In terms of assembly, component of the KPC complex composed of RNF123/KPC1 and UBAC1/KPC2. Interacts with UBAC1 and CDKN1B via its N-terminal domain. Interacts with RIGI (via N-terminus) and IFIH1 (via N-terminus). Ubiquitinated, leading to its degradation. Deubiquitinated by USP19, thereby stimulating CDKN1B ubiquitin-dependent degradation.

The protein resides in the cytoplasm. It catalyses the reaction S-ubiquitinyl-[E2 ubiquitin-conjugating enzyme]-L-cysteine + [acceptor protein]-L-lysine = [E2 ubiquitin-conjugating enzyme]-L-cysteine + N(6)-ubiquitinyl-[acceptor protein]-L-lysine.. The protein operates within protein modification; protein ubiquitination. In terms of biological role, catalytic subunit of the KPC complex that acts as E3 ubiquitin-protein ligase. Promotes the ubiquitination and proteasome-mediated degradation of CDKN1B which is the cyclin-dependent kinase inhibitor at the G0-G1 transition of the cell cycle. Also acts as a key regulator of the NF-kappa-B signaling by promoting maturation of the NFKB1 component of NF-kappa-B. Acts by catalyzing ubiquitination of the NFKB1 p105 precursor, leading to limited proteasomal degradation of NFKB1 p105 and generation of the active NFKB1 p50 subunit. Functions also as an inhibitor of innate antiviral signaling mediated by RIGI and IFIH1 independently of its E3 ligase activity. Interacts with the N-terminal CARD domains of RIGI and IFIH1 and competes with the downstream adapter MAVS. The chain is E3 ubiquitin-protein ligase RNF123 from Oryctolagus cuniculus (Rabbit).